Consider the following 766-residue polypeptide: Lanosterol synthase ERG7 (766 aa).

The tract at residues M1 to T47 is disordered. Residues A148–G190 form a PFTB 1 repeat. The active-site Proton donor is the D482. 2 PFTB repeats span residues I586–G626 and S635–T676.

Belongs to the terpene cyclase/mutase family.

It is found in the lipid droplet. Its subcellular location is the endoplasmic reticulum membrane. It carries out the reaction (S)-2,3-epoxysqualene = lanosterol. It participates in terpene metabolism; lanosterol biosynthesis; lanosterol from farnesyl diphosphate: step 3/3. Its pathway is steroid metabolism; ergosterol biosynthesis. In terms of biological role, lanosterol synthase; part of the third module of ergosterol biosynthesis pathway that includes the late steps of the pathway. ERG7 catalyzes the cyclization of (S)-2,3 oxidosqualene to lanosterol, a reaction that forms the sterol core. The third module or late pathway involves the ergosterol synthesis itself through consecutive reactions that mainly occur in the endoplasmic reticulum (ER) membrane. Firstly, the squalene synthase ERG9 catalyzes the condensation of 2 farnesyl pyrophosphate moieties to form squalene, which is the precursor of all steroids. Squalene synthase is crucial for balancing the incorporation of farnesyl diphosphate (FPP) into sterol and nonsterol isoprene synthesis. Secondly, squalene is converted into lanosterol by the consecutive action of the squalene epoxidase ERG1 and the lanosterol synthase ERG7. Then, the delta(24)-sterol C-methyltransferase ERG6 methylates lanosterol at C-24 to produce eburicol. Eburicol is the substrate of the sterol 14-alpha demethylase encoded by CYP51A, CYP51B and CYP51C, to yield 4,4,24-trimethyl ergosta-8,14,24(28)-trienol. CYP51B encodes the enzyme primarily responsible for sterol 14-alpha-demethylation, and plays an essential role in ascospore formation. CYP51A encodes an additional sterol 14-alpha-demethylase, induced on ergosterol depletion and responsible for the intrinsic variation in azole sensitivity. The third CYP51 isoform, CYP51C, does not encode a sterol 14-alpha-demethylase, but is required for full virulence on host wheat ears. The C-14 reductase ERG24 then reduces the C14=C15 double bond which leads to 4,4-dimethylfecosterol. A sequence of further demethylations at C-4, involving the C-4 demethylation complex containing the C-4 methylsterol oxidases ERG25, the sterol-4-alpha-carboxylate 3-dehydrogenase ERG26 and the 3-keto-steroid reductase ERG27, leads to the production of fecosterol via 4-methylfecosterol. ERG28 has a role as a scaffold to help anchor ERG25, ERG26 and ERG27 to the endoplasmic reticulum. The C-8 sterol isomerase ERG2 then catalyzes the reaction which results in unsaturation at C-7 in the B ring of sterols and thus converts fecosterol to episterol. The sterol-C5-desaturases ERG3A and ERG3BB then catalyze the introduction of a C-5 double bond in the B ring to produce 5-dehydroepisterol. The C-22 sterol desaturases ERG5A and ERG5B further convert 5-dehydroepisterol into ergosta-5,7,22,24(28)-tetraen-3beta-ol by forming the C-22(23) double bond in the sterol side chain. Finally, ergosta-5,7,22,24(28)-tetraen-3beta-ol is substrate of the C-24(28) sterol reductase ERG4 to produce ergosterol. In Gibberella zeae (strain ATCC MYA-4620 / CBS 123657 / FGSC 9075 / NRRL 31084 / PH-1) (Wheat head blight fungus), this protein is Lanosterol synthase ERG7.